Consider the following 515-residue polypeptide: Hopanoid C-3 methylase (515 aa).

The 134-residue stretch at 8-141 (PSPLMYTKVF…ETLARRGNID (134 aa)) folds into the B12-binding domain. The region spanning 181 to 395 (GTLDPCASIE…DIQHAVLPTR (215 aa)) is the Radical SAM core domain. [4Fe-4S] cluster-binding residues include cysteine 195, cysteine 199, and cysteine 202.

The protein belongs to the radical SAM superfamily. Requires [4Fe-4S] cluster as cofactor.

Its function is as follows. Required for methylation of hopanoids at the C-3 position. The protein is Hopanoid C-3 methylase of Methylococcus capsulatus (strain ATCC 33009 / NCIMB 11132 / Bath).